Consider the following 439-residue polypeptide: Glutamine synthetase (439 aa).

Residues S12–K93 form the GS beta-grasp domain. The GS catalytic domain occupies P99–L439. Mg(2+) is bound by residues E122 and E124. Position 172 (E172) interacts with ATP. Mg(2+) is bound by residues E177 and E184. G229 contributes to the L-glutamate binding site. Residue H233 participates in Mg(2+) binding. Residues H235–S237 and S237 contribute to the ATP site. Positions 283, 289, and 301 each coordinate L-glutamate. ATP is bound by residues R301, R306, and K313. E318 lines the Mg(2+) pocket. R320 provides a ligand contact to L-glutamate.

It belongs to the glutamine synthetase family. Oligomer of 12 subunits arranged in the form of two hexagons. Mg(2+) serves as cofactor.

It localises to the cytoplasm. The enzyme catalyses L-glutamate + NH4(+) + ATP = L-glutamine + ADP + phosphate + H(+). In terms of biological role, probably involved in nitrogen metabolism via ammonium assimilation. Catalyzes the ATP-dependent biosynthesis of glutamine from glutamate and ammonia. This is Glutamine synthetase from Pyrococcus woesei.